Reading from the N-terminus, the 112-residue chain is Ribosome-binding factor A (112 aa).

It belongs to the RbfA family. Monomer. Binds 30S ribosomal subunits, but not 50S ribosomal subunits or 70S ribosomes.

It is found in the cytoplasm. Its function is as follows. One of several proteins that assist in the late maturation steps of the functional core of the 30S ribosomal subunit. Associates with free 30S ribosomal subunits (but not with 30S subunits that are part of 70S ribosomes or polysomes). Required for efficient processing of 16S rRNA. May interact with the 5'-terminal helix region of 16S rRNA. The chain is Ribosome-binding factor A from Mycoplasmopsis pulmonis (strain UAB CTIP) (Mycoplasma pulmonis).